We begin with the raw amino-acid sequence, 394 residues long: Na(+)/H(+) antiporter NhaA (394 aa).

Transmembrane regions (helical) follow at residues 14–34, 59–79, 95–115, 125–145, 154–174, 179–199, 213–233, 254–274, 292–312, 328–348, and 363–383; these read AGGL…NSAL, LLLW…GLEV, VFPA…YLLF, GWAI…ALLG, VFLL…IALF, VSLQ…YMNW, LVLW…GVIV, GLHP…NAGV, IATG…WLAV, IFAV…IASL, and LGIL…LRLV.

The protein belongs to the NhaA Na(+)/H(+) (TC 2.A.33) antiporter family.

It localises to the cell inner membrane. It catalyses the reaction Na(+)(in) + 2 H(+)(out) = Na(+)(out) + 2 H(+)(in). Its function is as follows. Na(+)/H(+) antiporter that extrudes sodium in exchange for external protons. This Yersinia pestis bv. Antiqua (strain Angola) protein is Na(+)/H(+) antiporter NhaA.